The chain runs to 689 residues: MSEKTFLVEIGTEELPPKALRSLAESFAANFTAELDNAGLAHGNVEWFAAPRRLALKVANLAESQPDREVEKRGPAIAQAFDAEGKPSKAAEGWARGCGITVDQAERLKTDKGEWLLYRAHVKGESTEALVPNMVVTSLAKLPIPKLMRWGASDVHFVRPVHTVTLLLGDKVIPATILGIQSDRVIRGHRFMGEPEFTIDSAEQYPQILLERGKVIADYEARKAKIKADAEEAARKIGGNADLSESLLEEVASLVEWPVVLTAKFEEKFLAVPAEALVYTMKGDQKYFPVYDNAGKLLPNFIFVANIESKDPTQIISGNEKVVRPRLADAEFFFNTDRKKRLEDHLPRLQTVLFQQQLGTLRDKTDRIQALAGWIAGQIGADVNHATRAGLLSKCDLMTNMVFEFTDTQGVMGMHYARHDGEAEDVAVALNEQYQPRFAGDDLPSNPVACALAIADKMDTLAGIFGIGQHPKGDKDPFALRRAALGVLRIIVEKNLNLDLQTLTEEAARLYGDKLTNANVVDDVIDFMLGRFRAWYQDEGYTVDTIQAVLARRPTRPADFDARMKAVSHFRTLEEASALAAANKRVSNILAKATEPLNDIVHASVLKEAAEIELARHLVVLRDKLQPYFADGRYQEALIELAALRAPVDEFFENVMVNAEEKDIRINRLTLLSKLRELFLQVADISLLQ.

The protein belongs to the class-II aminoacyl-tRNA synthetase family. In terms of assembly, tetramer of two alpha and two beta subunits.

The protein resides in the cytoplasm. The enzyme catalyses tRNA(Gly) + glycine + ATP = glycyl-tRNA(Gly) + AMP + diphosphate. In Salmonella paratyphi A (strain ATCC 9150 / SARB42), this protein is Glycine--tRNA ligase beta subunit.